The following is a 290-amino-acid chain: Ribosomal protein L11 methyltransferase (290 aa).

Residues Thr-135, Gly-158, Asp-180, and Asn-227 each coordinate S-adenosyl-L-methionine.

The protein belongs to the methyltransferase superfamily. PrmA family.

The protein resides in the cytoplasm. It carries out the reaction L-lysyl-[protein] + 3 S-adenosyl-L-methionine = N(6),N(6),N(6)-trimethyl-L-lysyl-[protein] + 3 S-adenosyl-L-homocysteine + 3 H(+). Its function is as follows. Methylates ribosomal protein L11. The protein is Ribosomal protein L11 methyltransferase of Chelativorans sp. (strain BNC1).